Reading from the N-terminus, the 1117-residue chain is MKNINNKILKIFILFLAICSVKSDTCPTDSNWRPTPASSNSPVSPALPTTSLASDIVYGGNDLYYMAYWSMTDPNNLQPVSDVESEFSIALPAWAPDYFLIVAKQSAPALKANTNYQFSFDFKLGQVLTQGITYSNMTLSFYKPGDIDYLLWSYRAPMYSFTFTGDFSSTTYKSKTITFSVPVDLGLSTLILQVNRSRAMDYDDTTIFYKNMKITVPSKPVVAPPNLITKDSELINIPKASVSLDPQDLSTCPYLASDLVHWHNPSTWSNNLVPQPNENITIPAGKRVLISPCSISQTAIYQRIVIPATSELIFADSNLTMNVKDILVQGKFIMGTTKCRYNANINIIFHGSKTKVDTIAPFYGSKGIAVSAGGFISVHGKQYHNSWTKLASTVWSGDRIIYVQDNINWEVGQQVLITTSQFKDEIDNQNEVLTIKSILGKAIEFTTPIKFYHYGGKEYQAEVALLSRRIIFQGNDESDQDSFGGHVLVSGEGQFAGIQLKKMGQRNVKARYPLHFHLANVVQKSYISDCVVTKSYYRCYTIHGTNNLTLTRNVAFDVNGHCYYLEDGVEMDNTLSYNLAAFVHTIGEPAAGGAQTGETYYENENLTQPADSAAGGFYITNAYNTIIGNSASGGWAGFSFPNLEKPIGNHKNVEMEPQAFTTKVFEGNTAHSSGYQWISGSSIYVGGKLITDEVTGLLVYNTGRHSRPTCKDGIFSYDSSTYLWMRFNNTKVYLSNLGLGHWGDRVEVVGLEAYDSMRPASLFGAAWLSNAIVDGTGNILSKSQSYNRQGFQFYDTYVTTILSHITFRNFIQNPTSVYPDDDNVVIIALTFSDLYKPQFISSTINITLENILPAQIIGHKIVPDSGSSRFFNFIDWDGSLVGTHVPTIVGSHEKWWSYDDSKCTYNNDWTIWVCQKGSKSVGNIEFWVPNLIIRGEQNEGDSFVGSVSLFGDGITDVRKTAITRNAGITGITSTGWMLWLDGGSPTYLQVWAAQVAYQQYIFLAIPYPPGTTFTISTENKWAWQNAYGFNCTLASSAAEVRSSNGTKYYFDQTHLFVKIVNPVLTGSPAESFNRGGAKIDDVYWEYIYHINATNPNVSPNQDGFYTNLSYTLPSSTL.

Residues 1-23 (MKNINNKILKIFILFLAICSVKS) form the signal peptide. Residues N136, N195, N279, and N318 are each glycosylated (N-linked (GlcNAc...) asparagine). The G8 domain occupies 266–392 (STWSNNLVPQ…YHNSWTKLAS (127 aa)). PbH1 repeat units follow at residues 522-544 (VQKSYISDCVVTKSYYRCYTIHG) and 545-567 (TNNLTLTRNVAFDVNGHCYYLED). Residues N547 and N605 are each glycosylated (N-linked (GlcNAc...) asparagine). A PbH1 3 repeat occupies 621 to 642 (NAYNTIIGNSASGGWAGFSFPN). Residues N728, N845, N1030, N1044, N1091, and N1107 are each glycosylated (N-linked (GlcNAc...) asparagine).

This sequence belongs to the comF family.

The protein resides in the secreted. The protein is Protein rliB (rliB) of Dictyostelium discoideum (Social amoeba).